Here is a 402-residue protein sequence, read N- to C-terminus: Tryptophan synthase beta chain (402 aa).

Lys-91 is subject to N6-(pyridoxal phosphate)lysine.

The protein belongs to the TrpB family. In terms of assembly, tetramer of two alpha and two beta chains. Pyridoxal 5'-phosphate is required as a cofactor.

The enzyme catalyses (1S,2R)-1-C-(indol-3-yl)glycerol 3-phosphate + L-serine = D-glyceraldehyde 3-phosphate + L-tryptophan + H2O. It functions in the pathway amino-acid biosynthesis; L-tryptophan biosynthesis; L-tryptophan from chorismate: step 5/5. Functionally, the beta subunit is responsible for the synthesis of L-tryptophan from indole and L-serine. This is Tryptophan synthase beta chain from Streptococcus thermophilus (strain ATCC BAA-250 / LMG 18311).